A 260-amino-acid polypeptide reads, in one-letter code: DNA-binding protein RFXANK (260 aa).

Positions 1–79 (MELTQPAEDL…STTLTNRQRG (79 aa)) are disordered. The segment covering 22-33 (GDPEDPGEEAAD) has biased composition (acidic residues). Residues 57 to 77 (SVSSPQAGSSLKHSTTLTNRQ) are compositionally biased toward polar residues. ANK repeat units lie at residues 89–118 (LDSL…NLVN), 123–152 (RGFT…DPHI), 156–185 (ERES…DINI), 189–218 (NGGT…DLTT), and 222–251 (SGYT…KLFQ).

Forms homodimers. The RFX heterotetrameric complex consists of 2 molecules of RFX5 and one each of RFXAP and RFX-B/RFXANK; with each subunit representing a separate complementation group. Interacts (via ankyrin repeats) with RFX5 (via PxLPxI/L motif); the interaction is direct. RFX forms cooperative DNA binding complexes with X2BP and CBF/NF-Y. RFX associates with CIITA to form an active transcriptional complex. Interacts with RAF1. Interacts (via ankyrin repeats) with RFX7 (via PxLPxI/L motif). In terms of processing, phosphorylated by RAF1. As to expression, ubiquitous.

Its subcellular location is the cytoplasm. It localises to the nucleus. Its function is as follows. Activates transcription from class II MHC promoters. Activation requires the activity of the MHC class II transactivator/CIITA. May regulate other genes in the cell. RFX binds the X1 box of MHC-II promoters. May also potentiate the activation of RAF1. In terms of biological role, isoform 2 is not involved in the positive regulation of MHC class II genes. The chain is DNA-binding protein RFXANK (RFXANK) from Homo sapiens (Human).